A 624-amino-acid chain; its full sequence is (-)-beta-phellandrene synthase 2, chloroplastic (624 aa).

The transit peptide at 1-48 (MAIVSSVPLASKSCLHKSLISSIHKLKPFCRTIPTLGMSRPGKYVMPS) directs the protein to the chloroplast. Positions 375, 379, and 527 each coordinate Mg(2+). A DDXXD motif motif is present at residues 375-379 (DDMYD).

It belongs to the terpene synthase family. Tpsd subfamily. Mg(2+) is required as a cofactor. The cofactor is Mn(2+).

Its subcellular location is the plastid. It localises to the chloroplast. It carries out the reaction (2E)-geranyl diphosphate = (-)-beta-phellandrene + diphosphate. It functions in the pathway terpene metabolism; oleoresin biosynthesis. Terpene synthase (TPS) involved in the biosynthesis of monoterpene natural products included in conifer oleoresin secretions and volatile emissions; these compounds contribute to biotic and abiotic stress defense against herbivores and pathogens. Catalyzes the conversion of (2E)-geranyl diphosphate (GPP) to (-)-beta-phellandrene. In Picea sitchensis (Sitka spruce), this protein is (-)-beta-phellandrene synthase 2, chloroplastic.